A 446-amino-acid polypeptide reads, in one-letter code: Phosphoglucosamine mutase (446 aa).

S103 serves as the catalytic Phosphoserine intermediate. Mg(2+) contacts are provided by S103, D242, D244, and D246. Phosphoserine is present on S103.

It belongs to the phosphohexose mutase family. Mg(2+) serves as cofactor. Activated by phosphorylation.

It catalyses the reaction alpha-D-glucosamine 1-phosphate = D-glucosamine 6-phosphate. In terms of biological role, catalyzes the conversion of glucosamine-6-phosphate to glucosamine-1-phosphate. The polypeptide is Phosphoglucosamine mutase (Vibrio vulnificus (strain CMCP6)).